The primary structure comprises 657 residues: Translation factor GUF1, mitochondrial (657 aa).

The transit peptide at 1–39 directs the protein to the mitochondrion; the sequence is MRGCLQSVKWLTSALRPSQSLASSTRYPRRLLSTSAPRN. Positions 59 to 239 constitute a tr-type G domain; sequence ERFRNFCIVA…TVIEQIPAPV (181 aa). Residues 121 to 128, 185 to 189, and 239 to 242 contribute to the GTP site; these read HQGEDYLL, INKVD, and VGDR.

The protein belongs to the TRAFAC class translation factor GTPase superfamily. Classic translation factor GTPase family. LepA subfamily.

The protein resides in the mitochondrion inner membrane. The enzyme catalyses GTP + H2O = GDP + phosphate + H(+). In terms of biological role, promotes mitochondrial protein synthesis. May act as a fidelity factor of the translation reaction, by catalyzing a one-codon backward translocation of tRNAs on improperly translocated ribosomes. Binds to mitochondrial ribosomes in a GTP-dependent manner. This is Translation factor GUF1, mitochondrial from Ajellomyces capsulatus (strain H143) (Darling's disease fungus).